A 241-amino-acid chain; its full sequence is ATP synthase subunit a (241 aa).

Transmembrane regions (helical) follow at residues 30 to 50 (GQVF…ISVG), 91 to 111 (FIGT…LIPW), 128 to 148 (INTT…AGLS), 193 to 213 (LVVG…VMFL), and 214 to 234 (GLFT…YYIG).

Belongs to the ATPase A chain family. In terms of assembly, F-type ATPases have 2 components, CF(1) - the catalytic core - and CF(0) - the membrane proton channel. CF(1) has five subunits: alpha(3), beta(3), gamma(1), delta(1), epsilon(1). CF(0) has four main subunits: a, b, b' and c.

The protein localises to the cellular thylakoid membrane. Its function is as follows. Key component of the proton channel; it plays a direct role in the translocation of protons across the membrane. The sequence is that of ATP synthase subunit a from Prochlorococcus marinus subsp. pastoris (strain CCMP1986 / NIES-2087 / MED4).